The chain runs to 93 residues: MADIMDIKSILYTEKSLGLQEKGVLVVQTAQNMTKNQLKEVFKTYFGFEPLKINSLKQEGKVKRFRGKLGQRKSFKKFYVKVPEGASIVALGA.

This sequence belongs to the universal ribosomal protein uL23 family. As to quaternary structure, part of the 50S ribosomal subunit. Contacts protein L29, and trigger factor when it is bound to the ribosome.

In terms of biological role, one of the early assembly proteins it binds 23S rRNA. One of the proteins that surrounds the polypeptide exit tunnel on the outside of the ribosome. Forms the main docking site for trigger factor binding to the ribosome. This Helicobacter acinonychis (strain Sheeba) protein is Large ribosomal subunit protein uL23.